The following is a 639-amino-acid chain: MSQDNEYGAGQIQVLEGLEAVRKRPAMYIGSTDSRGLHHLVYEVVDNSIDEALAGHCDAIEVALHEDGSVSVTDNGRGIPVDTHEQYDRPALEVIMTVLHAGGKFDNKSYQVSGGLHGVGVSVVNALSSELEVEVKRDGAVWTHRFEVGEPQVEEFERVRDLEPGEDTGTTIRFWPDDGIFETTEFDFKTLENRLRELAFLNSGVEISLSDERTDESSTFLFEGGIREFVEYLNETKTALHDDVIYYDDESEGIEVEIAMQATDELQGSIHAFANNINTREGGTHLTGFKTALTRVVNDYANTHDMLDDLDGDNLRGEDVREGLTAVISIKHPDPQFEGQTKTKLGNSEVRGIVESVTHQQLGTFFEENPDTATAIISKAVEAARARKAAKQAEELTRRKSALESTSLPGKLADCQSRDPAESELFIVEGDSAGGSAKQGRDRKFQAILPLKGKILNVEKHRLDRILENDEIRALITAIGGGVGDEFDIEKARYQRLILMTDADVDGAHIRTLLLTLLYRHMRPLIEAGYVYAAQPPLYRVRYRGNTYDAMDEAERDRIIEEECNGNPTQVQRFKGLGEMNPDQLWDTTMNPENRVLKRITVEDAAAADRMFNILMGDAVGPRKQFIKDHANDAEWVDI.

Residues 392–402 (QAEELTRRKSA) show a composition bias toward basic and acidic residues. Residues 392-416 (QAEELTRRKSALESTSLPGKLADCQ) are disordered. One can recognise a Toprim domain in the interval 423–537 (SELFIVEGDS…AGYVYAAQPP (115 aa)). Residues Glu429, Asp502, and Asp504 each coordinate Mg(2+). A Glycyl lysine isopeptide (Lys-Gly) (interchain with G-Cter in SAMP2) cross-link involves residue Lys624.

This sequence belongs to the type II topoisomerase GyrB family. In terms of assembly, heterotetramer, composed of two GyrA and two GyrB chains. In the heterotetramer, GyrA contains the active site tyrosine that forms a transient covalent intermediate with DNA, while GyrB binds cofactors and catalyzes ATP hydrolysis. Mg(2+) serves as cofactor. It depends on Mn(2+) as a cofactor. Ca(2+) is required as a cofactor.

It is found in the cytoplasm. The enzyme catalyses ATP-dependent breakage, passage and rejoining of double-stranded DNA.. Functionally, a type II topoisomerase that negatively supercoils closed circular double-stranded (ds) DNA in an ATP-dependent manner to modulate DNA topology and maintain chromosomes in an underwound state. Negative supercoiling favors strand separation, and DNA replication, transcription, recombination and repair, all of which involve strand separation. Also able to catalyze the interconversion of other topological isomers of dsDNA rings, including catenanes and knotted rings. Type II topoisomerases break and join 2 DNA strands simultaneously in an ATP-dependent manner. The protein is DNA gyrase subunit B of Haloferax volcanii (strain ATCC 29605 / DSM 3757 / JCM 8879 / NBRC 14742 / NCIMB 2012 / VKM B-1768 / DS2) (Halobacterium volcanii).